A 140-amino-acid chain; its full sequence is Zinc finger SWIM domain-containing protein 7 (140 aa).

An SWIM-type zinc finger spans residues 76 to 114 (YTCFTSCHYCPCPAFSFTVLRRNESLMCKHLLAVILSQA).

The protein belongs to the SWS1 family.

The protein resides in the nucleus. In terms of biological role, involved in early stages of the homologous recombination repair (HRR) pathway of double-stranded DNA breaks arising during DNA replication or induced by DNA-damaging agents. The polypeptide is Zinc finger SWIM domain-containing protein 7 (zswim7) (Danio rerio (Zebrafish)).